Here is a 99-residue protein sequence, read N- to C-terminus: uncharacterized protein (99 aa).

This is an uncharacterized protein from Saccharomyces cerevisiae (strain ATCC 204508 / S288c) (Baker's yeast).